We begin with the raw amino-acid sequence, 29 residues long: Mycofactocin precursor peptide (29 aa).

It belongs to the mycofactocin precursor peptide family. The post-translational modifications that lead to mycofactocin involve oxidative decarboxylation of the C-terminal tyrosine residue catalyzed by MftC, introduction of a tyramine-valine cross-link, removal of the modified C-terminal dipeptide by MftE. The released dipeptide then undergoes oxidative deamination by MftD, glycosylation by MftF and methylation by an unknown enzyme.

Its function is as follows. Precursor peptide that leads to mycofactocin (MFT) after extensive post-translational modifications by enzymes encoded by adjacent genes. Mycofactocin acts as a redox cofactor of nicotinamide-dependent oxidoreductases encoded in the same locus. The polypeptide is Mycofactocin precursor peptide (Mycobacterium tuberculosis (strain ATCC 25618 / H37Rv)).